Reading from the N-terminus, the 103-residue chain is Pyrimidine/purine nucleoside phosphorylase (103 aa).

It belongs to the nucleoside phosphorylase PpnP family.

The catalysed reaction is a purine D-ribonucleoside + phosphate = a purine nucleobase + alpha-D-ribose 1-phosphate. The enzyme catalyses adenosine + phosphate = alpha-D-ribose 1-phosphate + adenine. It carries out the reaction cytidine + phosphate = cytosine + alpha-D-ribose 1-phosphate. It catalyses the reaction guanosine + phosphate = alpha-D-ribose 1-phosphate + guanine. The catalysed reaction is inosine + phosphate = alpha-D-ribose 1-phosphate + hypoxanthine. The enzyme catalyses thymidine + phosphate = 2-deoxy-alpha-D-ribose 1-phosphate + thymine. It carries out the reaction uridine + phosphate = alpha-D-ribose 1-phosphate + uracil. It catalyses the reaction xanthosine + phosphate = alpha-D-ribose 1-phosphate + xanthine. Functionally, catalyzes the phosphorolysis of diverse nucleosides, yielding D-ribose 1-phosphate and the respective free bases. Can use uridine, adenosine, guanosine, cytidine, thymidine, inosine and xanthosine as substrates. Also catalyzes the reverse reactions. The protein is Pyrimidine/purine nucleoside phosphorylase of Sulfurovum sp. (strain NBC37-1).